A 592-amino-acid chain; its full sequence is Neurogenic locus notch homolog protein (592 aa).

An N-terminal signal peptide occupies residues 1–19 (MIFVLTLVALCTAIHCPDG). EGF-like domains follow at residues 64 to 104 (YPSI…DYQV), 106 to 146 (VPEA…EKCT), 267 to 307 (YPEA…NTCI), 353 to 387 (NSQTNPPQLCHSAGSCDFDTGVCSCNPTNSGPTCE), 453 to 488 (VPNSCVTASLIICSNRGTCTDGVCKCNEGYSGALCE), and 546 to 588 (IDGE…KHCN). Disulfide bonds link C68-C82, C76-C92, C110-C123, C117-C134, C136-C145, C271-C284, C278-C293, C295-C306, C362-C375, C377-C386, C457-C471, C478-C487, C550-C565, C555-C576, and C578-C587. N552 carries N-linked (GlcNAc...) asparagine glycosylation.

The protein belongs to the NOTCH family. Interacts with EB1.

The protein localises to the cell projection. The protein resides in the cilium. Its subcellular location is the flagellum. It is found in the cytoplasm. It localises to the cytoskeleton. The protein localises to the flagellum axoneme. The sequence is that of Neurogenic locus notch homolog protein from Giardia intestinalis (strain ATCC 50803 / WB clone C6) (Giardia lamblia).